The following is a 105-amino-acid chain: Small ribosomal subunit protein uS14m (105 aa).

The protein belongs to the universal ribosomal protein uS14 family. As to quaternary structure, component of the mitochondrial small ribosomal subunit (mt-SSU). Mature yeast 74S mitochondrial ribosomes consist of a small (37S) and a large (54S) subunit. The 37S small subunit contains a 15S ribosomal RNA (15S mt-rRNA) and at least 32 different proteins. The 54S large subunit contains a 21S rRNA (21S mt-rRNA) and at least 45 different proteins.

The protein localises to the mitochondrion. Its function is as follows. Component of the mitochondrial ribosome (mitoribosome), a dedicated translation machinery responsible for the synthesis of mitochondrial genome-encoded proteins, including at least some of the essential transmembrane subunits of the mitochondrial respiratory chain. The mitoribosomes are attached to the mitochondrial inner membrane and translation products are cotranslationally integrated into the membrane. The sequence is that of Small ribosomal subunit protein uS14m (mrp2) from Schizosaccharomyces pombe (strain 972 / ATCC 24843) (Fission yeast).